A 190-amino-acid polypeptide reads, in one-letter code: MSKEYEHLFKFVLAGDSGVGKTSILFRITDDTFTETHITIGIEFKIKTVYIEGKPIKLQIWDTAGEKRFRVHNSHYRGCHGVIIVYDVTDQRSFENVPSWIEDIRRYANENVIKIIIGNKNDLVSQKVVDPFLAQEFADSLDIPFKEISAKQSINIEEAFISLVKLCINRIEETSLKKTQSPEKNNCIIN.

Position 15 to 22 (15 to 22 (GDSGVGKT)) interacts with GTP. An Effector region motif is present at residues 37 to 44 (HITIGIEF). GTP contacts are provided by residues 62–66 (DTAGE) and 119–122 (NKND). C187 carries the cysteine methyl ester modification. A lipid anchor (S-geranylgeranyl cysteine) is attached at C187. The propeptide at 188 to 190 (IIN) is removed in mature form.

The protein belongs to the small GTPase superfamily. Rab family.

The protein resides in the cell membrane. This is Ras-related protein RabF1 (rabF1-1) from Dictyostelium discoideum (Social amoeba).